Consider the following 122-residue polypeptide: UPF0145 protein TV0671 (122 aa).

The protein belongs to the UPF0145 family.

In Thermoplasma volcanium (strain ATCC 51530 / DSM 4299 / JCM 9571 / NBRC 15438 / GSS1), this protein is UPF0145 protein TV0671.